We begin with the raw amino-acid sequence, 256 residues long: Protein FixA (256 aa).

It belongs to the ETF beta-subunit/FixA family. Heterodimer of FixA and FixB.

It participates in amine and polyamine metabolism; carnitine metabolism. Required for anaerobic carnitine reduction. May bring reductant to CaiA. The chain is Protein FixA from Escherichia fergusonii (strain ATCC 35469 / DSM 13698 / CCUG 18766 / IAM 14443 / JCM 21226 / LMG 7866 / NBRC 102419 / NCTC 12128 / CDC 0568-73).